The chain runs to 689 residues: MANKEYPLAKFRNIGIMAHIDAGKTTATERILFYTGKTHKIGETHEGAATMDWMEQEQERGITITSAATTCFWKDHQVNIIDTPGHVDFTVEVERSLRVLDGAVTILDAKSGVEPQTETVWRQADNYKVPRMVFINKMDKLGADFLMSVGTLRERLHANAVPLQLPIGAEDSFSGIIDLVKNDAVIYKDDLGTVMDETEIPEDMKEIAEEYRTMLLEAVAEVDEDIMMKYLEGEEISVEEIKTALRKGVLANKIVPVLCGSAYKNKGVQLLLDAIIEFMPSPLDIEDVKGTEPTTGEEMTRPADAKAPLAALAFKIATDPFIGKLAFTRIYSGTMKSGTYVFNSNKGKRERIGRLVKMHANHREDVEELKAGELGAIVGLKDTTTGDTLCDDADPIILENMEFPEPVIDVSIEPKTKAGQEKMGIALAKLAEEDPTFRTYTNQETGQTIIAGMGELHLEIIVDRLIREFKVECNVGQPQVAYKETIKKHVKAEGKFIRQSGGRGQYGHCWIEMMPTEGEYEFQNAVVGGSIPKEYIPAIDNGIQEASQSGIIAGYPVINFKVKLFDGSYHDVDSSEMAFKIAGSMAFKNAMSKADAVLLEPSMKVEVVVPEEYMGDVIGDINSRRGRIEGMTPRAGAEVIRAFVPLSEMFGYATTLRSKTQGRGNYVMQFDHYEEVPKSIQDKVIGERK.

Residues 9–283 (AKFRNIGIMA…AIIEFMPSPL (275 aa)) enclose the tr-type G domain. GTP contacts are provided by residues 18–25 (AHIDAGKT), 82–86 (DTPGH), and 136–139 (NKMD).

It belongs to the TRAFAC class translation factor GTPase superfamily. Classic translation factor GTPase family. EF-G/EF-2 subfamily.

It is found in the cytoplasm. In terms of biological role, catalyzes the GTP-dependent ribosomal translocation step during translation elongation. During this step, the ribosome changes from the pre-translocational (PRE) to the post-translocational (POST) state as the newly formed A-site-bound peptidyl-tRNA and P-site-bound deacylated tRNA move to the P and E sites, respectively. Catalyzes the coordinated movement of the two tRNA molecules, the mRNA and conformational changes in the ribosome. In Clostridium botulinum (strain ATCC 19397 / Type A), this protein is Elongation factor G.